A 315-amino-acid polypeptide reads, in one-letter code: Gamma-hemolysin component C (315 aa).

A signal peptide spans 1 to 29 (MLKNKILATTLSVSLLAPLANPLLENAKA).

Belongs to the aerolysin family. In terms of assembly, toxicity requires sequential binding and synergistic association of a class S and a class F component which form heterooligomeric complexes. HlgC (class S) associates with HlgB (class F) thus forming an CB toxin.

Functionally, toxin that seems to act by forming pores in the membrane of the cell. Has a hemolytic and a leucotoxic activity. This Staphylococcus aureus (strain Mu50 / ATCC 700699) protein is Gamma-hemolysin component C (hlgC).